Consider the following 553-residue polypeptide: MFCIQCEQTIQTPTTKGCSFAQGMCGKTAEVSDLQDILVYALQGVSFWAEQGRKVNVILDEIDQWAPKAFFATLTNVNFDPERVIEFALQAQDYKQQLEETVRAAATVTNTELDELSPAAKFELPTEADQIIALAPQAAVNRGHETQHEDVIGLRLLCLYGLKGAAAYMEHAHVLGQTDKDVFTEYHQIMAWLGTDPTDLGELLDCSMKIGLMNYRIMEMLDTGETNTFGHPEPSQVNVKTIKGKCILVSGHDLHDLEKILQQTEGKGINVYTNGEMLPAHSYPELKKYPHLVGNYGSAWQNQQKEFANFPGAIVMTSNCLLNPNVGQYADRLFTRSIVGWPGVAHIEGDDFTAVIDCALAQEGFKHNEIEQMITVGFGRNALMAAAPAVVEQVKEGNISHFFLVGGCDGDKSERSYYTDFTAQAPEDSVILTLACGKYRFNKNQFGDINGIPRLLDVGQCNDAYSAIQLALALAKEFDCGINELPLTLVLSWFEQKAIVILLTLFALGVKGIYTGPTAPAFLTDNLLAIIQEKFDMRSIGNVEDDLKAILAA.

Residues C3, C6, C18, and C25 each coordinate [2Fe-2S] cluster. Residues H252, E276, C320, C408, C436, C461, E495, and K497 each coordinate hybrid [4Fe-2O-2S] cluster. C408 is subject to Cysteine persulfide.

It belongs to the HCP family. The cofactor is [2Fe-2S] cluster. Hybrid [4Fe-2O-2S] cluster is required as a cofactor.

The protein localises to the cytoplasm. The enzyme catalyses A + NH4(+) + H2O = hydroxylamine + AH2 + H(+). In terms of biological role, catalyzes the reduction of hydroxylamine to form NH(3) and H(2)O. In Aliivibrio fischeri (strain ATCC 700601 / ES114) (Vibrio fischeri), this protein is Hydroxylamine reductase.